Reading from the N-terminus, the 844-residue chain is Elongation factor 2 (844 aa).

One can recognise a tr-type G domain in the interval 17–255 (TNVRNMSVIA…LWGDNYFNPK (239 aa)). GTP is bound at residue 26-33 (AHVDHGKS). Phosphothreonine occurs at positions 57 and 59. GTP is bound by residues 160-163 (NKVD) and 215-217 (SGL). His-700 bears the Diphthamide mark.

Belongs to the TRAFAC class translation factor GTPase superfamily. Classic translation factor GTPase family. EF-G/EF-2 subfamily.

Its subcellular location is the cytoplasm. It catalyses the reaction GTP + H2O = GDP + phosphate + H(+). Catalyzes the GTP-dependent ribosomal translocation step during translation elongation. During this step, the ribosome changes from the pre-translocational (PRE) to the post-translocational (POST) state as the newly formed A-site-bound peptidyl-tRNA and P-site-bound deacylated tRNA move to the P and E sites, respectively. Catalyzes the coordinated movement of the two tRNA molecules, the mRNA and conformational changes in the ribosome. This chain is Elongation factor 2 (cot-3), found in Neurospora crassa (strain ATCC 24698 / 74-OR23-1A / CBS 708.71 / DSM 1257 / FGSC 987).